The following is a 142-amino-acid chain: Ovocleidin-17 (142 aa).

Cystine bridges form between Cys-5–Cys-16, Cys-33–Cys-138, and Cys-113–Cys-130. Residues 12 to 139 (TPGGCLGFFS…CTERNAFVCK (128 aa)) enclose the C-type lectin domain. N-linked (GlcNAc...) asparagine glycosylation occurs at Asn-59. Phosphoserine is present on residues Ser-61 and Ser-67.

As to expression, expressed in the shell gland mucosa. Not detected in hen liver, magnum, isthmus, cartilage, bone or in egg white or yolk.

The protein resides in the secreted. The protein localises to the extracellular space. Its subcellular location is the extracellular matrix. May form proteinaceous networks during the construction of the eggshell which then may control the deposition of the mineral phase. The polypeptide is Ovocleidin-17 (Gallus gallus (Chicken)).